The following is a 1073-amino-acid chain: ATP-dependent helicase/deoxyribonuclease subunit B (1073 aa).

Belongs to the helicase family. AddB/RexB type 2 subfamily. Heterodimer of AddA and RexB. The cofactor is Mg(2+).

Its function is as follows. The heterodimer acts as both an ATP-dependent DNA helicase and an ATP-dependent, dual-direction single-stranded exonuclease. Recognizes the chi site generating a DNA molecule suitable for the initiation of homologous recombination. This subunit has 5' -&gt; 3' nuclease activity but not helicase activity. In Streptococcus equi subsp. zooepidemicus (strain MGCS10565), this protein is ATP-dependent helicase/deoxyribonuclease subunit B.